Reading from the N-terminus, the 124-residue chain is S-adenosylmethionine decarboxylase proenzyme (124 aa).

Residue serine 63 is the Schiff-base intermediate with substrate; via pyruvic acid of the active site. Serine 63 carries the pyruvic acid (Ser); by autocatalysis modification. The active-site Proton acceptor; for processing activity is the histidine 68. The Proton donor; for catalytic activity role is filled by cysteine 83.

The protein belongs to the prokaryotic AdoMetDC family. Type 1 subfamily. Heterotetramer of two alpha and two beta chains arranged as a dimer of alpha/beta heterodimers. It depends on pyruvate as a cofactor. Post-translationally, is synthesized initially as an inactive proenzyme. Formation of the active enzyme involves a self-maturation process in which the active site pyruvoyl group is generated from an internal serine residue via an autocatalytic post-translational modification. Two non-identical subunits are generated from the proenzyme in this reaction, and the pyruvate is formed at the N-terminus of the alpha chain, which is derived from the carboxyl end of the proenzyme. The post-translation cleavage follows an unusual pathway, termed non-hydrolytic serinolysis, in which the side chain hydroxyl group of the serine supplies its oxygen atom to form the C-terminus of the beta chain, while the remainder of the serine residue undergoes an oxidative deamination to produce ammonia and the pyruvoyl group blocking the N-terminus of the alpha chain.

It carries out the reaction S-adenosyl-L-methionine + H(+) = S-adenosyl 3-(methylsulfanyl)propylamine + CO2. It functions in the pathway amine and polyamine biosynthesis; S-adenosylmethioninamine biosynthesis; S-adenosylmethioninamine from S-adenosyl-L-methionine: step 1/1. Functionally, catalyzes the decarboxylation of S-adenosylmethionine to S-adenosylmethioninamine (dcAdoMet), the propylamine donor required for the synthesis of the polyamines spermine and spermidine from the diamine putrescine. The polypeptide is S-adenosylmethionine decarboxylase proenzyme (Thermoanaerobacter pseudethanolicus (strain ATCC 33223 / 39E) (Clostridium thermohydrosulfuricum)).